A 311-amino-acid polypeptide reads, in one-letter code: L-lactate dehydrogenase 2 (311 aa).

3 residues coordinate NAD(+): Val14, Asp35, and Arg40. Substrate is bound at residue Arg90. NAD(+) contacts are provided by residues Ser103, 120 to 122 (ATN), and Thr145. 122-125 (NPCD) provides a ligand contact to substrate. 150–153 (DTTR) contacts substrate. The active-site Proton acceptor is His177. A substrate-binding site is contributed by Thr230.

The protein belongs to the LDH/MDH superfamily. LDH family. Homotetramer.

The protein resides in the cytoplasm. It catalyses the reaction (S)-lactate + NAD(+) = pyruvate + NADH + H(+). It functions in the pathway fermentation; pyruvate fermentation to lactate; (S)-lactate from pyruvate: step 1/1. Catalyzes the conversion of lactate to pyruvate. The sequence is that of L-lactate dehydrogenase 2 from Listeria monocytogenes serotype 4b (strain F2365).